The primary structure comprises 110 residues: Iron-sulfur cluster insertion protein ErpA (110 aa).

Residues cysteine 38, cysteine 102, and cysteine 104 each contribute to the iron-sulfur cluster site.

Belongs to the HesB/IscA family. Homodimer. Iron-sulfur cluster serves as cofactor.

Functionally, required for insertion of 4Fe-4S clusters for at least IspG. This chain is Iron-sulfur cluster insertion protein ErpA, found in Marinobacter nauticus (strain ATCC 700491 / DSM 11845 / VT8) (Marinobacter aquaeolei).